Consider the following 59-residue polypeptide: Cuticle protein 16 isoform D (59 aa).

This is Cuticle protein 16 isoform D from Limulus polyphemus (Atlantic horseshoe crab).